The chain runs to 214 residues: Nigrelysin (214 aa).

Residues 1–21 form the signal peptide; it reads MKNRLVIIVFMVVTMLCASLA. Positions 22–35 are excised as a propeptide; the sequence is LPLEEKEDEKDEKR. Residues 38-47 are plays an important role in the hemolytic activity; sequence EVAGAVMEGA. Residues 46–65 form an N-terminal region region; that stretch reads GANLGMSVLQTILQAIGDVS. Positions 89, 122, 140, 142, 168, 172, and 173 each coordinate phosphocholine. The segment at 140–155 is trp-rich region, which is important for the binding to lipid membrane; sequence SVPYDYNWYSNWWNVK. A Cell attachment site, crucial for protein stability motif is present at residues 179–181; the sequence is KGD.

It belongs to the actinoporin family. Sea anemone subfamily. As to quaternary structure, octamer or nonamer in membranes. Monomer in the soluble state.

The protein localises to the secreted. The protein resides in the nematocyst. It is found in the target cell membrane. Its function is as follows. Pore-forming protein that forms cation-selective hydrophilic pores in cell membranes and causes cytolysis. Pore formation is a multi-step process that involves specific recognition of membrane sphingomyelin (but neither cholesterol nor phosphatidylcholine) using aromatic rich region and adjacent phosphocholine (POC) binding site, firm binding to the membrane (mainly driven by hydrophobic interactions) accompanied by the transfer of the N-terminal region to the lipid-water interface and finally pore formation after oligomerization of monomers. This protein shows potent hemolytic activity (EC(50)=0.09 nM), as well as potent cytotoxic activity on nucleated cells (L1210 cells). The cytotoxic process starts with cellular swelling that is time and dose dependent and occurs up to a critical volume, probably due to influx of water via pores opened by this actinoporin. The second phase consists of the final loss of membrane integrity that leads to cytolysis. This Anthopleura nigrescens (Sea anemone) protein is Nigrelysin.